Consider the following 280-residue polypeptide: MTQPQRPSIYFNVHLVSDSTGETLNAIQRAACAQFENVQPLEHNYYLVRSERQLERVMKEIEAAPGVVWYTISDGALRGRLEAFCRERSIPTLPVLDPSIAMLSRHLGVAPNNRVAGQHALDEDYFERMEAINFTLAHDDGQNVESLIGADVILLGVSRTSKTPTCVYLANRKVRAGNIPLVPGVPLPDFMEKMGDKGPLVVGLKISAERLVQIRRQRLISLNQDEITEYADEEAVRDEITQANRLFQRNGWKTIDVSRRSVEETAAGILNMLHERWGHS.

Position 156–163 (156–163 (GVSRTSKT)) interacts with ADP.

Belongs to the pyruvate, phosphate/water dikinase regulatory protein family. PDRP subfamily.

It catalyses the reaction N(tele)-phospho-L-histidyl/L-threonyl-[pyruvate, phosphate dikinase] + ADP = N(tele)-phospho-L-histidyl/O-phospho-L-threonyl-[pyruvate, phosphate dikinase] + AMP + H(+). The catalysed reaction is N(tele)-phospho-L-histidyl/O-phospho-L-threonyl-[pyruvate, phosphate dikinase] + phosphate + H(+) = N(tele)-phospho-L-histidyl/L-threonyl-[pyruvate, phosphate dikinase] + diphosphate. Functionally, bifunctional serine/threonine kinase and phosphorylase involved in the regulation of the pyruvate, phosphate dikinase (PPDK) by catalyzing its phosphorylation/dephosphorylation. The chain is Putative pyruvate, phosphate dikinase regulatory protein from Hyphomonas neptunium (strain ATCC 15444).